The sequence spans 198 residues: Glycerol-3-phosphate acyltransferase (198 aa).

The next 5 helical transmembrane spans lie at 6-26, 55-75, 83-103, 113-133, and 154-174; these read FLPVALIIGYLFGSIPFGLIL, GLAAGTLLGDALKGTAAVIIS, AAMIAGLGAFLGHLFPVWLKF, IGILIGLFWPGAIFFCLVWLA, and IVLWAFGHTALAALFALLTLL.

It belongs to the PlsY family. Probably interacts with PlsX.

The protein resides in the cell inner membrane. It catalyses the reaction an acyl phosphate + sn-glycerol 3-phosphate = a 1-acyl-sn-glycero-3-phosphate + phosphate. It functions in the pathway lipid metabolism; phospholipid metabolism. Its function is as follows. Catalyzes the transfer of an acyl group from acyl-phosphate (acyl-PO(4)) to glycerol-3-phosphate (G3P) to form lysophosphatidic acid (LPA). This enzyme utilizes acyl-phosphate as fatty acyl donor, but not acyl-CoA or acyl-ACP. This is Glycerol-3-phosphate acyltransferase from Bradyrhizobium sp. (strain BTAi1 / ATCC BAA-1182).